The sequence spans 251 residues: Triosephosphate isomerase (251 aa).

Position 9–11 (9–11 (NWK)) interacts with substrate. The active-site Electrophile is His-95. The active-site Proton acceptor is Glu-167. Substrate is bound by residues Gly-173, Ser-213, and 234 to 235 (GG). Residue Ser-213 is modified to Phosphoserine.

This sequence belongs to the triosephosphate isomerase family. As to quaternary structure, homodimer.

Its subcellular location is the cytoplasm. The catalysed reaction is D-glyceraldehyde 3-phosphate = dihydroxyacetone phosphate. It functions in the pathway carbohydrate biosynthesis; gluconeogenesis. It participates in carbohydrate degradation; glycolysis; D-glyceraldehyde 3-phosphate from glycerone phosphate: step 1/1. Its function is as follows. Involved in the gluconeogenesis. Catalyzes stereospecifically the conversion of dihydroxyacetone phosphate (DHAP) to D-glyceraldehyde-3-phosphate (G3P). The protein is Triosephosphate isomerase of Anoxybacillus flavithermus (strain DSM 21510 / WK1).